Here is a 151-residue protein sequence, read N- to C-terminus: Ubiquitin-conjugating enzyme E2 2 (151 aa).

A disordered region spans residues 1–26 (MSTSARRRLMRDFKRMQTDPPAGVSA). One can recognise a UBC core domain in the interval 4 to 150 (SARRRLMRDF…VRETVEKSWE (147 aa)). Cysteine 88 functions as the Glycyl thioester intermediate in the catalytic mechanism.

The protein belongs to the ubiquitin-conjugating enzyme family.

The protein localises to the cytoplasm. Its subcellular location is the nucleus. The catalysed reaction is S-ubiquitinyl-[E1 ubiquitin-activating enzyme]-L-cysteine + [E2 ubiquitin-conjugating enzyme]-L-cysteine = [E1 ubiquitin-activating enzyme]-L-cysteine + S-ubiquitinyl-[E2 ubiquitin-conjugating enzyme]-L-cysteine.. The protein operates within protein modification; protein ubiquitination. Catalyzes the covalent attachment of ubiquitin to other proteins. Plays a role in transcription regulation by catalyzing the monoubiquitination of histone H2B to form H2BK123ub1. H2BK123ub1 gives a specific tag for epigenetic transcriptional activation and is also a prerequisite for H3K4me and H3K79me formation. Also involved in postreplication repair of UV-damaged DNA, in N-end rule-dependent protein degradation and in sporulation. The polypeptide is Ubiquitin-conjugating enzyme E2 2 (uvsJ) (Emericella nidulans (strain FGSC A4 / ATCC 38163 / CBS 112.46 / NRRL 194 / M139) (Aspergillus nidulans)).